The primary structure comprises 337 residues: Biotin synthase (337 aa).

Positions Q39 to R267 constitute a Radical SAM core domain. Residues C54, C58, and C61 each contribute to the [4Fe-4S] cluster site. [2Fe-2S] cluster-binding residues include C98, C130, C190, and R262.

The protein belongs to the radical SAM superfamily. Biotin synthase family. Homodimer. The cofactor is [4Fe-4S] cluster. Requires [2Fe-2S] cluster as cofactor.

The catalysed reaction is (4R,5S)-dethiobiotin + (sulfur carrier)-SH + 2 reduced [2Fe-2S]-[ferredoxin] + 2 S-adenosyl-L-methionine = (sulfur carrier)-H + biotin + 2 5'-deoxyadenosine + 2 L-methionine + 2 oxidized [2Fe-2S]-[ferredoxin]. It functions in the pathway cofactor biosynthesis; biotin biosynthesis; biotin from 7,8-diaminononanoate: step 2/2. In terms of biological role, catalyzes the conversion of dethiobiotin (DTB) to biotin by the insertion of a sulfur atom into dethiobiotin via a radical-based mechanism. In Cytophaga hutchinsonii (strain ATCC 33406 / DSM 1761 / CIP 103989 / NBRC 15051 / NCIMB 9469 / D465), this protein is Biotin synthase.